Here is a 256-residue protein sequence, read N- to C-terminus: Capsid protein (256 aa).

A Bipartite nuclear localization signal motif is present at residues 3–20 (KRPADIIISTPGSKVRRR). Residues 40 to 54 (KRQSWTNRPINRKPR) carry the Nuclear localization signal motif. A zinc finger spans residues 68–85 (CEGPCKVQSFESRHDVVH). The Nuclear export signal signature appears at 101–122 (LTHRVGKRFCVKSIYILGKIWM). Residues 200–247 (RRFFRVNNYVVYNQQEAGKYENHTENALMLYMACTHASNPVYATLKIR) carry the Bipartite nuclear localization signal motif.

The protein belongs to the geminiviridae capsid protein family. As to quaternary structure, homomultimer. Binds to single-stranded and double-stranded viral DNA. Interacts (via nuclear localization signals) with host importin alpha-1a.

Its subcellular location is the virion. It localises to the host nucleus. Its function is as follows. Encapsidates the viral DNA into characteristic twinned ('geminate') particles. Binds the genomic viral ssDNA and shuttles it into and out of the cell nucleus. The CP of bipartite geminiviruses is not required for cell-to-cell or systemic movement. The polypeptide is Capsid protein (Manihot esculenta (Cassava)).